Here is a 379-residue protein sequence, read N- to C-terminus: Flap endonuclease 1 (379 aa).

Positions 1-105 are N-domain; sequence MGVKGLNQLI…GELEKRLLRR (105 aa). Asp34 contributes to the Mg(2+) binding site. Residues Arg47 and Arg71 each contribute to the DNA site. Residues Asp87, Glu159, Glu161, Asp180, and Asp182 each coordinate Mg(2+). Residues 123 to 254 are I-domain; the sequence is DMVRYEKRTV…VTAFKLIKEH (132 aa). Glu159 is a binding site for DNA. Gly232 and Asp234 together coordinate DNA. A Mg(2+)-binding site is contributed by Asp234. An interaction with PCNA region spans residues 341-349; it reads VQGRLDGFF. The interval 344-379 is disordered; the sequence is RLDGFFQSVPKPKDSADKKRKNDTKSAKSKKAKTRK. Residues 361–379 show a composition bias toward basic residues; that stretch reads KKRKNDTKSAKSKKAKTRK.

It belongs to the XPG/RAD2 endonuclease family. FEN1 subfamily. Interacts with PCNA. Three molecules of FEN1 bind to one PCNA trimer with each molecule binding to one PCNA monomer. PCNA stimulates the nuclease activity without altering cleavage specificity. The cofactor is Mg(2+). Post-translationally, phosphorylated. Phosphorylation upon DNA damage induces relocalization to the nuclear plasma.

It is found in the nucleus. It localises to the nucleolus. Its subcellular location is the nucleoplasm. The protein resides in the mitochondrion. Structure-specific nuclease with 5'-flap endonuclease and 5'-3' exonuclease activities involved in DNA replication and repair. During DNA replication, cleaves the 5'-overhanging flap structure that is generated by displacement synthesis when DNA polymerase encounters the 5'-end of a downstream Okazaki fragment. It enters the flap from the 5'-end and then tracks to cleave the flap base, leaving a nick for ligation. Also involved in the long patch base excision repair (LP-BER) pathway, by cleaving within the apurinic/apyrimidinic (AP) site-terminated flap. Acts as a genome stabilization factor that prevents flaps from equilibrating into structures that lead to duplications and deletions. Also possesses 5'-3' exonuclease activity on nicked or gapped double-stranded DNA, and exhibits RNase H activity. Also involved in replication and repair of rDNA and in repairing mitochondrial DNA. The chain is Flap endonuclease 1 from Debaryomyces hansenii (strain ATCC 36239 / CBS 767 / BCRC 21394 / JCM 1990 / NBRC 0083 / IGC 2968) (Yeast).